A 139-amino-acid chain; its full sequence is Maximins 4/H3 type 5 (139 aa).

The signal sequence occupies residues Met1–Ala18. The propeptide occupies Arg19–Arg43. Asn70 is subject to Asparagine amide. The propeptide occupies Thr74–Arg118. Ile138 carries the post-translational modification Isoleucine amide.

The protein belongs to the bombinin family. In terms of tissue distribution, expressed by the skin glands.

It is found in the secreted. Its function is as follows. Maximin-4 shows antibacterial activity against both Gram-positive and Gram-negative bacteria. It also shows antimicrobial activity against the fungus C.albicans, but not against A.flavus nor P.uticale. It has little hemolytic activity. It does not possess a significant cytotoxicity against tumor cell lines. It does not possess a significant anti-HIV activity. Functionally, maximin-H3 shows antibacterial activity against both Gram-positive and Gram-negative bacteria. It also shows antimicrobial activity against the fungus C.albicans. Shows strong hemolytic activity. In Bombina maxima (Giant fire-bellied toad), this protein is Maximins 4/H3 type 5.